A 79-amino-acid polypeptide reads, in one-letter code: Small ribosomal subunit protein bS16c (79 aa).

This sequence belongs to the bacterial ribosomal protein bS16 family.

The protein resides in the plastid. It is found in the chloroplast. The sequence is that of Small ribosomal subunit protein bS16c from Trieres chinensis (Marine centric diatom).